Here is an 858-residue protein sequence, read N- to C-terminus: Heat shock protein 105 kDa (858 aa).

Residue S2 is modified to N-acetylserine. K471 carries the N6-acetyllysine modification. Disordered stretches follow at residues 500–585 and 801–858; these read KVPT…PPEA and VNQP…MDLD. A compositionally biased stretch (acidic residues) spans 504–515; it reads EEDDGSSVEADM. A phosphoserine mark is found at S509 and S510. Polar residues predominate over residues 533 to 549; sequence QQDNSEAGTQPQVQTDG. Position 558 is a phosphoserine (S558). 2 stretches are compositionally biased toward basic and acidic residues: residues 564-585 and 806-815; these read EENK…PPEA and PKIESPKLER. S810 carries the post-translational modification Phosphoserine. T816 bears the Phosphothreonine mark. The segment covering 822 to 834 has biased composition (basic and acidic residues); sequence LDKKEDLEGKDNF.

Belongs to the heat shock protein 70 family. Interacts with HSPA8/HSC70. Interacts with HSPA1A (via NBD) and HSPA1B (via NBD). Post-translationally, phosphorylation on Ser-509 may be important for regulation of the HSPA8/HSC70 chaperone activity. As to expression, predominantly expressed in the brain and also found in the liver.

Its subcellular location is the cytoplasm. Functionally, acts as a nucleotide-exchange factor (NEF) for chaperone proteins HSPA1A and HSPA1B, promoting the release of ADP from HSPA1A/B thereby triggering substrate release. Prevents the aggregation of denatured proteins in cells under severe stress, on which the ATP levels decrease markedly. Inhibits HSPA8/HSC70 ATPase and chaperone activities. This Cricetulus griseus (Chinese hamster) protein is Heat shock protein 105 kDa (HSPH1).